A 179-amino-acid chain; its full sequence is Small ribosomal subunit protein uS5 (179 aa).

The S5 DRBM domain occupies 22-85; it reads MIEKLVAVNR…EYARKRMSNV (64 aa).

The protein belongs to the universal ribosomal protein uS5 family. As to quaternary structure, part of the 30S ribosomal subunit. Contacts proteins S4 and S8.

With S4 and S12 plays an important role in translational accuracy. Functionally, located at the back of the 30S subunit body where it stabilizes the conformation of the head with respect to the body. The sequence is that of Small ribosomal subunit protein uS5 from Xylella fastidiosa (strain M23).